The primary structure comprises 318 residues: Olfactory receptor 51E1 (318 aa).

Residues 1–31 (MMVDPNGNESSATYFILIGLPGLEEAQFWLA) lie on the Extracellular side of the membrane. An N-linked (GlcNAc...) asparagine glycan is attached at Asn-8. A helical transmembrane segment spans residues 32–52 (FPLCSLYLIAVLGNLTIIYIV). The Cytoplasmic segment spans residues 53-60 (RTEHSLHE). The chain crosses the membrane as a helical span at residues 61–81 (PMYIFLCMLSGIDILISTSSM). Residues 82–100 (PKMLAIFWFNSTTIQFDAC) are Extracellular-facing. Asn-91 carries N-linked (GlcNAc...) asparagine glycosylation. Cys-100 and Cys-182 form a disulfide bridge. Residues 101 to 123 (LLQMFAIHSLSGMESTVLLAMAF) form a helical membrane-spanning segment. Topologically, residues 124 to 145 (DRYVAICHPLRHATVLTLPRVT) are cytoplasmic. A helical membrane pass occupies residues 146 to 166 (KIGVAAVVRGAALMAPLPVFI). Topologically, residues 167–198 (KQLPFCRSNILSHSYCLHQDVMKLACDDIRVN) are extracellular. Residues 199-219 (VVYGLIVIISAIGLDSLLISF) traverse the membrane as a helical segment. Residues 220 to 239 (SYLLILKTVLGLTREAQAKA) are Cytoplasmic-facing. Residues 240–260 (FGTCVSHVCAVFIFYVPFIGL) traverse the membrane as a helical segment. The Extracellular segment spans residues 261 to 275 (SMVHRFSKRRDSPLP). The helical transmembrane segment at 276-296 (VILANIYLLVPPVLNPIVYGV) threads the bilayer. Residues 297 to 318 (KTKEIRQRILRLFHVATHASEP) lie on the Cytoplasmic side of the membrane.

Belongs to the G-protein coupled receptor 1 family. In terms of tissue distribution, highly expressed in prostate. Very low levels may be detected in some other tissues, such as placenta, skeletal muscle, heart, ovary and testis. Up-regulated in prostate cancers.

Its subcellular location is the cell membrane. Functionally, odorant receptor. In Homo sapiens (Human), this protein is Olfactory receptor 51E1 (OR51E1).